The following is a 431-amino-acid chain: 3-phosphoshikimate 1-carboxyvinyltransferase (431 aa).

3-phosphoshikimate is bound by residues K26, S27, and R31. K26 contacts phosphoenolpyruvate. Residues G99 and R127 each coordinate phosphoenolpyruvate. 3-phosphoshikimate-binding residues include S170, S171, Q172, S199, E314, and H343. Q172 serves as a coordination point for phosphoenolpyruvate. E314 (proton acceptor) is an active-site residue. Residues R347, R388, and K413 each contribute to the phosphoenolpyruvate site.

It belongs to the EPSP synthase family. Monomer.

Its subcellular location is the cytoplasm. It catalyses the reaction 3-phosphoshikimate + phosphoenolpyruvate = 5-O-(1-carboxyvinyl)-3-phosphoshikimate + phosphate. It functions in the pathway metabolic intermediate biosynthesis; chorismate biosynthesis; chorismate from D-erythrose 4-phosphate and phosphoenolpyruvate: step 6/7. Catalyzes the transfer of the enolpyruvyl moiety of phosphoenolpyruvate (PEP) to the 5-hydroxyl of shikimate-3-phosphate (S3P) to produce enolpyruvyl shikimate-3-phosphate and inorganic phosphate. This Mycobacterium marinum (strain ATCC BAA-535 / M) protein is 3-phosphoshikimate 1-carboxyvinyltransferase.